Reading from the N-terminus, the 435-residue chain is 5-hydroxybenzimidazole synthase (435 aa).

Substrate-binding positions include Met95, Tyr124, His163, 186–188 (SKG), 227–230 (NGLR), and Glu266. Position 270 (His270) interacts with Zn(2+). Tyr293 contributes to the substrate binding site. His334 serves as a coordination point for Zn(2+). Positions 410, 413, and 417 each coordinate [4Fe-4S] cluster.

Belongs to the ThiC family. 5-hydroxybenzimidazole synthase subfamily. In terms of assembly, homodimer. It depends on [4Fe-4S] cluster as a cofactor.

It carries out the reaction 5-amino-1-(5-phospho-beta-D-ribosyl)imidazole + AH2 + S-adenosyl-L-methionine = 5-hydroxybenzimidazole + 5'-deoxyadenosine + formate + L-methionine + A + NH4(+) + phosphate + 2 H(+). Its pathway is cofactor biosynthesis; adenosylcobalamin biosynthesis. Its function is as follows. Catalyzes the complex conversion of aminoimidazole ribotide (AIR) to 5-hydroxybenzimidazole (5-HBI) in a radical S-adenosyl-L-methionine (SAM)-dependent reaction. Is thus involved in the anaerobic biosynthesis of dimethylbenzimidazole (DMB), the lower axial ligand of vitamin B12 (cobalamin). This Desulfuromonas acetoxidans (strain DSM 684 / 11070) protein is 5-hydroxybenzimidazole synthase.